The following is a 174-amino-acid chain: Adenine phosphoribosyltransferase (174 aa).

This sequence belongs to the purine/pyrimidine phosphoribosyltransferase family. In terms of assembly, homodimer.

It is found in the cytoplasm. The catalysed reaction is AMP + diphosphate = 5-phospho-alpha-D-ribose 1-diphosphate + adenine. It participates in purine metabolism; AMP biosynthesis via salvage pathway; AMP from adenine: step 1/1. Catalyzes a salvage reaction resulting in the formation of AMP, that is energically less costly than de novo synthesis. The chain is Adenine phosphoribosyltransferase from Photobacterium profundum (strain SS9).